The sequence spans 221 residues: MSQLKYILDIEGTVCPISFVKDTLYPFFLKQVESLVKTNDPTLQNLLAQFPVPQDASSLHEHIESLVNNDIKDSVLKQLQGYIWEQGYKSGEIKAPVYPDAIDFIQRHAPNVYIYSSGSVKAQILLFQHVEGDIDLTKSIAGYFDINTSGKKTEPQSYTNILKSIGVPPSSASDVVFISDNDKELDAALDVGISTILALRPGNNPVSNAEKYKALNNFSSI.

Aspartate 9 and glutamate 11 together coordinate Mg(2+). Residues 116–117 (SS) and lysine 152 each bind substrate. Aspartate 180 serves as a coordination point for Mg(2+).

Belongs to the HAD-like hydrolase superfamily. MasA/MtnC family. In terms of assembly, monomer. It depends on Mg(2+) as a cofactor.

Its subcellular location is the cytoplasm. The protein resides in the nucleus. It carries out the reaction 5-methylsulfanyl-2,3-dioxopentyl phosphate + H2O = 1,2-dihydroxy-5-(methylsulfanyl)pent-1-en-3-one + phosphate. It participates in amino-acid biosynthesis; L-methionine biosynthesis via salvage pathway; L-methionine from S-methyl-5-thio-alpha-D-ribose 1-phosphate: step 3/6. Its pathway is amino-acid biosynthesis; L-methionine biosynthesis via salvage pathway; L-methionine from S-methyl-5-thio-alpha-D-ribose 1-phosphate: step 4/6. In terms of biological role, bifunctional enzyme that catalyzes the enolization of 2,3-diketo-5-methylthiopentyl-1-phosphate (DK-MTP-1-P) into the intermediate 2-hydroxy-3-keto-5-methylthiopentenyl-1-phosphate (HK-MTPenyl-1-P), which is then dephosphorylated to form the acireductone 1,2-dihydroxy-3-keto-5-methylthiopentene (DHK-MTPene). The chain is Enolase-phosphatase E1 from Kluyveromyces lactis (strain ATCC 8585 / CBS 2359 / DSM 70799 / NBRC 1267 / NRRL Y-1140 / WM37) (Yeast).